The sequence spans 117 residues: Large ribosomal subunit protein bL19 (117 aa).

This sequence belongs to the bacterial ribosomal protein bL19 family.

Its function is as follows. This protein is located at the 30S-50S ribosomal subunit interface and may play a role in the structure and function of the aminoacyl-tRNA binding site. This is Large ribosomal subunit protein bL19 from Sorangium cellulosum (strain So ce56) (Polyangium cellulosum (strain So ce56)).